A 414-amino-acid chain; its full sequence is 3-phosphoshikimate 1-carboxyvinyltransferase (414 aa).

Positions 20, 21, and 25 each coordinate 3-phosphoshikimate. Lys-20 lines the phosphoenolpyruvate pocket. Positions 85 and 113 each coordinate phosphoenolpyruvate. 3-phosphoshikimate is bound by residues Ser-154, Ser-155, Gln-156, Ser-181, Asp-296, and Lys-323. Gln-156 provides a ligand contact to phosphoenolpyruvate. Residue Asp-296 is the Proton acceptor of the active site. Phosphoenolpyruvate contacts are provided by Arg-327, Arg-371, and Lys-395.

It belongs to the EPSP synthase family. As to quaternary structure, monomer.

The protein resides in the cytoplasm. It catalyses the reaction 3-phosphoshikimate + phosphoenolpyruvate = 5-O-(1-carboxyvinyl)-3-phosphoshikimate + phosphate. It participates in metabolic intermediate biosynthesis; chorismate biosynthesis. In terms of biological role, catalyzes the transfer of the enolpyruvyl moiety of phosphoenolpyruvate (PEP) to the 5-hydroxyl of shikimate-3-phosphate (S3P) to produce enolpyruvyl shikimate-3-phosphate and inorganic phosphate. The chain is 3-phosphoshikimate 1-carboxyvinyltransferase from Saccharolobus islandicus (strain Y.G.57.14 / Yellowstone #1) (Sulfolobus islandicus).